Reading from the N-terminus, the 503-residue chain is Variant surface glycoprotein AnTaT 1.1 (503 aa).

Positions Met-1 to Ala-29 are cleaved as a signal peptide. Disulfide bonds link Cys-45–Cys-172 and Cys-154–Cys-209. A glycan (N-linked (GlcNAc...) asparagine) is linked at Asn-113. Residues Asn-419 and Asn-432 are each glycosylated (N-linked (GlcNAc...) asparagine). A lipid anchor (GPI-anchor amidated aspartate) is attached at Asp-480. Positions Ser-481–Phe-503 are cleaved as a propeptide — removed in mature form.

It localises to the cell membrane. Its function is as follows. VSG forms a coat on the surface of the parasite. The trypanosome evades the immune response of the host by expressing a series of antigenically distinct VSGs from an estimated 1000 VSG genes. This is Variant surface glycoprotein AnTaT 1.1 from Trypanosoma brucei brucei.